We begin with the raw amino-acid sequence, 191 residues long: dCTP deaminase, dUMP-forming (191 aa).

DCTP contacts are provided by residues 101–106 (KSSLGR), aspartate 119, 127–129 (TLE), glutamine 148, tyrosine 162, and glutamine 174. Glutamate 129 serves as the catalytic Proton donor/acceptor. The segment at 169–191 (SRYQGQRGPTASRSFQNFHRTQV) is disordered. A compositionally biased stretch (polar residues) spans 171–191 (YQGQRGPTASRSFQNFHRTQV).

This sequence belongs to the dCTP deaminase family. Homotrimer.

The enzyme catalyses dCTP + 2 H2O = dUMP + NH4(+) + diphosphate. It functions in the pathway pyrimidine metabolism; dUMP biosynthesis; dUMP from dCTP: step 1/1. In terms of biological role, bifunctional enzyme that catalyzes both the deamination of dCTP to dUTP and the hydrolysis of dUTP to dUMP without releasing the toxic dUTP intermediate. This is dCTP deaminase, dUMP-forming from Streptomyces griseus subsp. griseus (strain JCM 4626 / CBS 651.72 / NBRC 13350 / KCC S-0626 / ISP 5235).